Consider the following 81-residue polypeptide: Large ribosomal subunit protein bL28 (81 aa).

This sequence belongs to the bacterial ribosomal protein bL28 family. Part of the 50S ribosomal subunit.

This chain is Large ribosomal subunit protein bL28, found in Deinococcus radiodurans (strain ATCC 13939 / DSM 20539 / JCM 16871 / CCUG 27074 / LMG 4051 / NBRC 15346 / NCIMB 9279 / VKM B-1422 / R1).